The chain runs to 521 residues: Bifunctional purine biosynthesis protein PurH (521 aa).

The 145-residue stretch at 1–145 folds into the MGS-like domain; the sequence is MIKQALISVS…KNHRDVTVVV (145 aa).

Belongs to the PurH family.

It carries out the reaction (6R)-10-formyltetrahydrofolate + 5-amino-1-(5-phospho-beta-D-ribosyl)imidazole-4-carboxamide = 5-formamido-1-(5-phospho-D-ribosyl)imidazole-4-carboxamide + (6S)-5,6,7,8-tetrahydrofolate. The catalysed reaction is IMP + H2O = 5-formamido-1-(5-phospho-D-ribosyl)imidazole-4-carboxamide. It functions in the pathway purine metabolism; IMP biosynthesis via de novo pathway; 5-formamido-1-(5-phospho-D-ribosyl)imidazole-4-carboxamide from 5-amino-1-(5-phospho-D-ribosyl)imidazole-4-carboxamide (10-formyl THF route): step 1/1. Its pathway is purine metabolism; IMP biosynthesis via de novo pathway; IMP from 5-formamido-1-(5-phospho-D-ribosyl)imidazole-4-carboxamide: step 1/1. This chain is Bifunctional purine biosynthesis protein PurH, found in Paraburkholderia phymatum (strain DSM 17167 / CIP 108236 / LMG 21445 / STM815) (Burkholderia phymatum).